The chain runs to 320 residues: Pyrroline-5-carboxylate reductase 2 (320 aa).

An N-acetylserine modification is found at serine 2. Residues 6–11 (IGAGQL) and serine 34 contribute to the NADP(+) site. Positions 8, 10, 11, 34, 36, 56, 70, 71, and 97 each coordinate NADPH. NADP(+) contacts are provided by residues asparagine 56, 69–72 (AVKP), and 95–97 (CAA). L-proline is bound at residue glutamate 164. Asparagine 230 lines the NADPH pocket. L-proline is bound by residues alanine 237 and threonine 238. The segment at 293-320 (ESPTVSTLAPPSSGKLLTRNPAQGSKRE) is disordered. Phosphoserine is present on serine 304.

The protein belongs to the pyrroline-5-carboxylate reductase family. In terms of assembly, homodecamer; composed of 5 homodimers. Interacts with LTO1.

It localises to the cytoplasm. Its subcellular location is the mitochondrion. The catalysed reaction is L-proline + NADP(+) = (S)-1-pyrroline-5-carboxylate + NADPH + 2 H(+). The enzyme catalyses L-proline + NAD(+) = (S)-1-pyrroline-5-carboxylate + NADH + 2 H(+). Its pathway is amino-acid biosynthesis; L-proline biosynthesis; L-proline from L-glutamate 5-semialdehyde: step 1/1. Oxidoreductase that catalyzes the last step in proline biosynthesis, which corresponds to the reduction of pyrroline-5-carboxylate to L-proline using NAD(P)H. At physiologic concentrations, has higher specific activity in the presence of NADH. Involved in cellular response to oxidative stress. In some cell types, such as erythrocytes, its primary function may be the generation of NADP(+). The polypeptide is Pyrroline-5-carboxylate reductase 2 (Rattus norvegicus (Rat)).